We begin with the raw amino-acid sequence, 267 residues long: Diphthine--ammonia ligase (267 aa).

Y97 carries the phosphotyrosine modification.

It belongs to the Diphthine--ammonia ligase family.

It carries out the reaction diphthine-[translation elongation factor 2] + NH4(+) + ATP = diphthamide-[translation elongation factor 2] + AMP + diphosphate + H(+). It participates in protein modification; peptidyl-diphthamide biosynthesis. Functionally, amidase that catalyzes the last step of diphthamide biosynthesis using ammonium and ATP. Diphthamide biosynthesis consists in the conversion of an L-histidine residue in the translation elongation factor 2 (EEF2) to diphthamide. This is Diphthine--ammonia ligase (Dph6) from Mus musculus (Mouse).